The chain runs to 323 residues: tRNA(Ile)-lysidine synthase (323 aa).

33–38 (SGGSDS) is a binding site for ATP.

The protein belongs to the tRNA(Ile)-lysidine synthase family.

It is found in the cytoplasm. The enzyme catalyses cytidine(34) in tRNA(Ile2) + L-lysine + ATP = lysidine(34) in tRNA(Ile2) + AMP + diphosphate + H(+). Its function is as follows. Ligates lysine onto the cytidine present at position 34 of the AUA codon-specific tRNA(Ile) that contains the anticodon CAU, in an ATP-dependent manner. Cytidine is converted to lysidine, thus changing the amino acid specificity of the tRNA from methionine to isoleucine. This is tRNA(Ile)-lysidine synthase from Mycobacterium leprae (strain TN).